A 347-amino-acid polypeptide reads, in one-letter code: Phenylalanine--tRNA ligase alpha subunit (347 aa).

Glu-268 lines the Mg(2+) pocket.

This sequence belongs to the class-II aminoacyl-tRNA synthetase family. Phe-tRNA synthetase alpha subunit type 1 subfamily. Tetramer of two alpha and two beta subunits. Mg(2+) serves as cofactor.

It is found in the cytoplasm. It carries out the reaction tRNA(Phe) + L-phenylalanine + ATP = L-phenylalanyl-tRNA(Phe) + AMP + diphosphate + H(+). The chain is Phenylalanine--tRNA ligase alpha subunit from Leptothrix cholodnii (strain ATCC 51168 / LMG 8142 / SP-6) (Leptothrix discophora (strain SP-6)).